Here is a 544-residue protein sequence, read N- to C-terminus: Probable protein kinase UbiB (544 aa).

The 379-residue stretch at Asp123 to Leu501 folds into the Protein kinase domain. ATP-binding positions include Leu129 to Val137 and Lys152. Asp287 functions as the Proton acceptor in the catalytic mechanism. The chain crosses the membrane as a helical span at residues Leu515–Phe537.

This sequence belongs to the ABC1 family. UbiB subfamily.

It localises to the cell inner membrane. Its pathway is cofactor biosynthesis; ubiquinone biosynthesis [regulation]. Functionally, is probably a protein kinase regulator of UbiI activity which is involved in aerobic coenzyme Q (ubiquinone) biosynthesis. This chain is Probable protein kinase UbiB, found in Aliivibrio fischeri (strain ATCC 700601 / ES114) (Vibrio fischeri).